The primary structure comprises 180 residues: Signal peptidase complex subunit 3 (180 aa).

Topologically, residues 1-11 are cytoplasmic; that stretch reads MNTVLSRANSL. The helical; Signal-anchor for type II membrane protein transmembrane segment at 12 to 32 threads the bilayer; sequence FAFSLSVMAALTFGCFITTAF. Residues 33-180 lie on the Lumenal side of the membrane; sequence KERSVPVSIA…PDTYETTKSY (148 aa). N-linked (GlcNAc...) asparagine glycosylation occurs at Asn-141.

Belongs to the SPCS3 family. In terms of assembly, component of the signal peptidase complex paralog A (SPC-A) composed of a catalytic subunit SEC11A and three accessory subunits SPCS1, SPCS2 and SPCS3. Component of the signal peptidase complex paralog C (SPC-C) composed of a catalytic subunit SEC11C and three accessory subunits SPCS1, SPCS2 and SPCS3. The complex induces a local thinning of the ER membrane which is used to measure the length of the signal peptide (SP) h-region of protein substrates. This ensures the selectivity of the complex towards h-regions shorter than 18-20 amino acids. As to expression, expressed in hen oviduct (at protein level).

It localises to the endoplasmic reticulum membrane. Functionally, essential component of the signal peptidase complex (SPC) which catalyzes the cleavage of N-terminal signal sequences from nascent proteins as they are translocated into the lumen of the endoplasmic reticulum. Essential for the SPC catalytic activity, possibly by stabilizing and positioning the active center of the complex close to the lumenal surface. The sequence is that of Signal peptidase complex subunit 3 from Gallus gallus (Chicken).